We begin with the raw amino-acid sequence, 379 residues long: Leukocyte elastase inhibitor (379 aa).

The residue at position 1 (M1) is an N-acetylmethionine. K137 and K177 each carry N6-acetyllysine. S300 is modified (phosphoserine). The tract at residues 351–379 (NFTADHPFLFFIRHNSSGSILFLGRFSSP) is CARD-binding motif (CBM).

The protein belongs to the serpin family. Ov-serpin subfamily. As to quaternary structure, monomer. Interacts (via C-terminus) with CASP1; CASP4 (via CARD domain) and CASP5; these interactions regulate the activity of inflammatory caspases. Interacts with PRTN3. Interacts with GZMH. As to expression, in human bone marrow, present in all CD45+ populations. Expression levels are highest in the neutrophil lineage, intermediate in monocytic, and lowest in lymphocytic lineage. Within the neutrophil lineage, expression is highest in promyelocytes.

The protein localises to the secreted. Its subcellular location is the cytoplasm. The protein resides in the cytolytic granule. It is found in the early endosome. In terms of biological role, neutrophil serine protease inhibitor that plays an essential role in the regulation of the innate immune response, inflammation and cellular homeostasis. Acts primarily to protect the cell from proteases released in the cytoplasm during stress or infection. These proteases are important in killing microbes but when released from granules, these potent enzymes also destroy host proteins and contribute to mortality. Regulates the activity of the neutrophil proteases elastase, cathepsin G, proteinase-3, chymase, chymotrypsin, and kallikrein-3. Also acts as a potent intracellular inhibitor of GZMH by directly blocking its proteolytic activity. During inflammation, limits the activity of inflammatory caspases CASP1, CASP4 and CASP5 by suppressing their caspase-recruitment domain (CARD) oligomerization and enzymatic activation. When secreted, promotes the proliferation of beta-cells via its protease inhibitory function. This is Leukocyte elastase inhibitor (SERPINB1) from Homo sapiens (Human).